A 301-amino-acid chain; its full sequence is Ribosomal RNA small subunit methyltransferase H (301 aa).

S-adenosyl-L-methionine contacts are provided by residues 31 to 33, D49, F76, D97, and Q104; that span reads GGY.

The protein belongs to the methyltransferase superfamily. RsmH family.

The protein resides in the cytoplasm. It catalyses the reaction cytidine(1402) in 16S rRNA + S-adenosyl-L-methionine = N(4)-methylcytidine(1402) in 16S rRNA + S-adenosyl-L-homocysteine + H(+). Its function is as follows. Specifically methylates the N4 position of cytidine in position 1402 (C1402) of 16S rRNA. This is Ribosomal RNA small subunit methyltransferase H from Ehrlichia ruminantium (strain Welgevonden).